Reading from the N-terminus, the 379-residue chain is MAPNIRKSHPLLKIINSSLIDLPSPSNISAWWNFGSLLGICLITQILTGLLLAMHYTADTSLAFSSVAHTCRNVQYGWLIRNLHANGASFFFICIYLHIGRGFYYGSYLYKETWNTGVVLLLTLMATAFVGYVLPWGQMSFWGATVITNLFSAIPYIGQTLVEWAWGGFSVDNPTLTRFFALHFLLPFLIAGITLIHLTFLHETGSNNPLGIVSHSDKIPFHPYFSLKDALGFALMFIPLLTLAFFSPNLLGDPENFTPANPLVTPPHIKPEWYFLFAYAILRSIPNKLGGVLALAASVLILFLIPFLHKSKQRSMTFRPLSQILFWLLVANLLILTWIGSQPVEHPFIIIGQMASFSYFLILLVLFPAIGALENKMLY.

The next 4 membrane-spanning stretches (helical) occupy residues 34-54 (FGSLLGICLITQILTGLLLAM), 78-99 (WLIRNLHANGASFFFICIYLHI), 114-134 (WNTGVVLLLTLMATAFVGYVL), and 179-199 (FFALHFLLPFLIAGITLIHLT). Heme b-binding residues include His-84 and His-98. Heme b contacts are provided by His-183 and His-197. His-202 contacts a ubiquinone. Transmembrane regions (helical) follow at residues 227 to 247 (LKDALGFALMFIPLLTLAFFS), 289 to 309 (LGGVLALAASVLILFLIPFLH), 321 to 341 (LSQILFWLLVANLLILTWIGS), and 348 to 368 (FIIIGQMASFSYFLILLVLFP).

Belongs to the cytochrome b family. In terms of assembly, the cytochrome bc1 complex contains 11 subunits: 3 respiratory subunits (MT-CYB, CYC1 and UQCRFS1), 2 core proteins (UQCRC1 and UQCRC2) and 6 low-molecular weight proteins (UQCRH/QCR6, UQCRB/QCR7, UQCRQ/QCR8, UQCR10/QCR9, UQCR11/QCR10 and a cleavage product of UQCRFS1). This cytochrome bc1 complex then forms a dimer. Heme b serves as cofactor.

The protein localises to the mitochondrion inner membrane. In terms of biological role, component of the ubiquinol-cytochrome c reductase complex (complex III or cytochrome b-c1 complex) that is part of the mitochondrial respiratory chain. The b-c1 complex mediates electron transfer from ubiquinol to cytochrome c. Contributes to the generation of a proton gradient across the mitochondrial membrane that is then used for ATP synthesis. The chain is Cytochrome b (MT-CYB) from Rhea americana (Greater rhea).